The primary structure comprises 845 residues: Ribosome-releasing factor 2, mitochondrial (845 aa).

The N-terminal 28 residues, 1–28 (MIIATSLRSQTFCTWRAWRAVHSTAVRL), are a transit peptide targeting the mitochondrion. The tr-type G domain maps to 38–330 (DRTRNIGIIA…GVVKYLPSPL (293 aa)). GTP contacts are provided by residues 47–54 (AHIDAGKT), 111–115 (DTPGH), and 165–168 (NKMD).

Belongs to the TRAFAC class translation factor GTPase superfamily. Classic translation factor GTPase family. EF-G/EF-2 subfamily.

It is found in the mitochondrion. Functionally, mitochondrial GTPase that mediates the disassembly of ribosomes from messenger RNA at the termination of mitochondrial protein biosynthesis. Not involved in the GTP-dependent ribosomal translocation step during translation elongation. This Scheffersomyces stipitis (strain ATCC 58785 / CBS 6054 / NBRC 10063 / NRRL Y-11545) (Yeast) protein is Ribosome-releasing factor 2, mitochondrial.